The chain runs to 74 residues: Translation initiation factor IF-1 (74 aa).

An S1-like domain is found at 1–72 (MGKEDVIRME…TRGRIVYRKK (72 aa)).

Belongs to the IF-1 family. Component of the 30S ribosomal translation pre-initiation complex which assembles on the 30S ribosome in the order IF-2 and IF-3, IF-1 and N-formylmethionyl-tRNA(fMet); mRNA recruitment can occur at any time during PIC assembly.

It is found in the cytoplasm. In terms of biological role, one of the essential components for the initiation of protein synthesis. Stabilizes the binding of IF-2 and IF-3 on the 30S subunit to which N-formylmethionyl-tRNA(fMet) subsequently binds. Helps modulate mRNA selection, yielding the 30S pre-initiation complex (PIC). Upon addition of the 50S ribosomal subunit IF-1, IF-2 and IF-3 are released leaving the mature 70S translation initiation complex. This is Translation initiation factor IF-1 from Thermotoga maritima (strain ATCC 43589 / DSM 3109 / JCM 10099 / NBRC 100826 / MSB8).